Here is a 628-residue protein sequence, read N- to C-terminus: Phosphomethylpyrimidine synthase (628 aa).

Substrate contacts are provided by residues N228, M257, Y286, H322, 342-344, 383-386, and E422; these read SRG and DGLR. H426 is a binding site for Zn(2+). Y449 serves as a coordination point for substrate. A Zn(2+)-binding site is contributed by H490. [4Fe-4S] cluster contacts are provided by C570, C573, and C578.

This sequence belongs to the ThiC family. Homodimer. It depends on [4Fe-4S] cluster as a cofactor.

It carries out the reaction 5-amino-1-(5-phospho-beta-D-ribosyl)imidazole + S-adenosyl-L-methionine = 4-amino-2-methyl-5-(phosphooxymethyl)pyrimidine + CO + 5'-deoxyadenosine + formate + L-methionine + 3 H(+). It functions in the pathway cofactor biosynthesis; thiamine diphosphate biosynthesis. Its function is as follows. Catalyzes the synthesis of the hydroxymethylpyrimidine phosphate (HMP-P) moiety of thiamine from aminoimidazole ribotide (AIR) in a radical S-adenosyl-L-methionine (SAM)-dependent reaction. The protein is Phosphomethylpyrimidine synthase of Methylibium petroleiphilum (strain ATCC BAA-1232 / LMG 22953 / PM1).